A 213-amino-acid polypeptide reads, in one-letter code: Redox-sensing transcriptional repressor Rex (213 aa).

Positions 18–57 form a DNA-binding region, H-T-H motif; the sequence is LYYRIFKRFHAEKIERANSKQIAEAIGIDSATVRRDFSYF. 92 to 97 contributes to the NAD(+) binding site; the sequence is GIGNMG.

Belongs to the transcriptional regulatory Rex family. In terms of assembly, homodimer.

The protein resides in the cytoplasm. Modulates transcription in response to changes in cellular NADH/NAD(+) redox state. Binds to the promoter of the aldehyde-alcohol dehydrogenase adhE gene. Functions as a redox-dependent repressor of adhE expression. The protein is Redox-sensing transcriptional repressor Rex of Streptococcus pneumoniae serotype 19F (strain G54).